An 859-amino-acid chain; its full sequence is Alanine--tRNA ligase (859 aa).

The Zn(2+) site is built by His562, His566, Cys664, and His668.

It belongs to the class-II aminoacyl-tRNA synthetase family. Zn(2+) is required as a cofactor.

Its subcellular location is the cytoplasm. The enzyme catalyses tRNA(Ala) + L-alanine + ATP = L-alanyl-tRNA(Ala) + AMP + diphosphate. Catalyzes the attachment of alanine to tRNA(Ala) in a two-step reaction: alanine is first activated by ATP to form Ala-AMP and then transferred to the acceptor end of tRNA(Ala). Also edits incorrectly charged Ser-tRNA(Ala) and Gly-tRNA(Ala) via its editing domain. This chain is Alanine--tRNA ligase, found in Aliivibrio fischeri (strain ATCC 700601 / ES114) (Vibrio fischeri).